The chain runs to 276 residues: F-box/LRR-repeat protein 20 (276 aa).

One can recognise an F-box domain in the interval 22–68 (AVINKKLPKELLLRIFSFLDVVTLCRCAQVSRAWNVLALDGSNWQRI). 8 LRR repeats span residues 74–100 (QRDI…SLRG), 101–126 (CLGV…SLNG), 127–152 (CTKT…DLAS), 153–178 (CTSI…NISW), 179–204 (CDQV…FLKG), 205–230 (CTQL…NLQT), 231–256 (CLQI…CASG), and 257–276 (CSNI…PRLR).

In terms of assembly, interacts with SKP1 and CUL1. As to expression, widely expressed, with highest expression in skeletal muscle, heart and brain.

The protein localises to the cytoplasm. Functionally, substrate-recognition component of the SCF (SKP1-CUL1-F-box protein)-type E3 ubiquitin ligase complex. Role in neural transmission. The protein is F-box/LRR-repeat protein 20 (Fbxl20) of Rattus norvegicus (Rat).